The primary structure comprises 453 residues: CCA-adding enzyme (453 aa).

ATP-binding residues include serine 53 and lysine 56. Serine 53 and lysine 56 together coordinate CTP. Positions 65, 67, and 119 each coordinate Mg(2+). ATP is bound by residues histidine 142, lysine 161, and tyrosine 170. Histidine 142, lysine 161, and tyrosine 170 together coordinate CTP.

It belongs to the tRNA nucleotidyltransferase/poly(A) polymerase family. Archaeal CCA-adding enzyme subfamily. Homodimer. The cofactor is Mg(2+).

The enzyme catalyses a tRNA precursor + 2 CTP + ATP = a tRNA with a 3' CCA end + 3 diphosphate. It carries out the reaction a tRNA with a 3' CCA end + 2 CTP + ATP = a tRNA with a 3' CCACCA end + 3 diphosphate. Catalyzes the addition and repair of the essential 3'-terminal CCA sequence in tRNAs without using a nucleic acid template. Adds these three nucleotides in the order of C, C, and A to the tRNA nucleotide-73, using CTP and ATP as substrates and producing inorganic pyrophosphate. tRNA 3'-terminal CCA addition is required both for tRNA processing and repair. Also involved in tRNA surveillance by mediating tandem CCA addition to generate a CCACCA at the 3' terminus of unstable tRNAs. While stable tRNAs receive only 3'-terminal CCA, unstable tRNAs are marked with CCACCA and rapidly degraded. This chain is CCA-adding enzyme, found in Pyrococcus furiosus (strain ATCC 43587 / DSM 3638 / JCM 8422 / Vc1).